The following is a 636-amino-acid chain: 1-phosphatidylinositol 4,5-bisphosphate phosphodiesterase zeta-1 (636 aa).

The EF-hand domain occupies 35 to 70 (CNTIHVKCIFKDNDRLKQGRITIEEFRTIYRIIAHR). The PI-PLC X-box domain maps to 155 to 299 (QDMTHPLSDY…LKFKILVRNK (145 aa)). Residues His-170 and His-215 contribute to the active site. The tract at residues 311 to 338 (KGFDKHGQVQECEEEEEAEQEEEENEVR) is disordered. Positions 318-345 (QVQECEEEEEAEQEEEENEVRDSEILDI) form a coiled coil. Positions 321–336 (ECEEEEEAEQEEEENE) are enriched in acidic residues. A PI-PLC Y-box domain is found at 375-491 (LSDLVIYTKV…GYILKPHFLR (117 aa)). The C2 domain occupies 491–617 (RDGKSIFNPN…KGYRRVPLFS (127 aa)).

As to quaternary structure, interacts via its C2 domain with PtdIns(3)P and, to a lesser extent, PtdIns(5)P in vitro. Requires Ca(2+) as cofactor. Expressed specifically in testis.

Its subcellular location is the nucleus. It localises to the cytoplasm. It is found in the perinuclear region. The enzyme catalyses a 1,2-diacyl-sn-glycero-3-phospho-(1D-myo-inositol-4,5-bisphosphate) + H2O = 1D-myo-inositol 1,4,5-trisphosphate + a 1,2-diacyl-sn-glycerol + H(+). Functionally, the production of the second messenger molecules diacylglycerol (DAG) and inositol 1,4,5-trisphosphate (IP3) is mediated by activated phosphatidylinositol-specific phospholipase C enzymes. In vitro, hydrolyzes PtdIns(4,5)P2 in a Ca(2+)-dependent manner. Triggers intracellular Ca(2+) oscillations in oocytes solely during M phase and is involved in inducing oocyte activation and initiating embryonic development up to the blastocyst stage. Is therefore a strong candidate for the egg-activating soluble sperm factor that is transferred from the sperm into the egg cytoplasm following gamete membrane fusion. May exert an inhibitory effect on phospholipase-C-coupled processes that depend on calcium ions and protein kinase C, including CFTR trafficking and function. In Sus scrofa (Pig), this protein is 1-phosphatidylinositol 4,5-bisphosphate phosphodiesterase zeta-1.